A 392-amino-acid chain; its full sequence is Cell division protein FtsZ (392 aa).

Residues 24-28 (GGGCN), 111-113 (GTG), glutamate 142, arginine 145, and aspartate 189 contribute to the GTP site.

Belongs to the FtsZ family. Homodimer. Polymerizes to form a dynamic ring structure in a strictly GTP-dependent manner. Interacts directly with several other division proteins.

It is found in the cytoplasm. Essential cell division protein that forms a contractile ring structure (Z ring) at the future cell division site. The regulation of the ring assembly controls the timing and the location of cell division. One of the functions of the FtsZ ring is to recruit other cell division proteins to the septum to produce a new cell wall between the dividing cells. Binds GTP and shows GTPase activity. The protein is Cell division protein FtsZ of Neisseria meningitidis serogroup A / serotype 4A (strain DSM 15465 / Z2491).